The chain runs to 339 residues: DNA-directed RNA polymerase RPB7 homolog (339 aa).

This sequence belongs to the Asfivirus DNA-directed RNA polymerase RPB7 homolog family. Part of the viral DNA-directed RNA polymerase that consists of 8 polII-like subunits (RPB1, RPB2, RPB3, RPB5, RPB6, RPB7, RPB9, RPB10), a capping enzyme and a termination factor.

The protein localises to the host cytoplasm. It is found in the virion. In terms of biological role, component of the DNA-directed RNA polymerase (RNAP) that catalyzes the transcription in the cytoplasm of viral DNA into RNA using the four ribonucleoside triphosphates as substrates. This is DNA-directed RNA polymerase RPB7 homolog from African swine fever virus (strain Badajoz 1971 Vero-adapted) (Ba71V).